A 458-amino-acid polypeptide reads, in one-letter code: Probable alpha-L-glutamate ligase (458 aa).

The interval 1-162 is unknown; that stretch reads MSDNKFIIGS…YGVKTAKKSG (162 aa). An alpha-L-glutamate ligase region spans residues 163-458; the sequence is LKIGLLASNP…IEKKLGWKAD (296 aa). The 184-residue stretch at 267-450 folds into the ATP-grasp domain; sequence LQLLQKNNLD…IAGAMIESIE (184 aa). Residues Lys-304, 341–342, Asp-350, and 374–376 each bind ATP; these read EF and RAN. Residues Asp-411, Glu-423, and Asn-425 each contribute to the Mg(2+) site. The Mn(2+) site is built by Asp-411, Glu-423, and Asn-425.

This sequence in the C-terminal section; belongs to the RimK family. The cofactor is Mg(2+). Requires Mn(2+) as cofactor.

The sequence is that of Probable alpha-L-glutamate ligase from Shewanella pealeana (strain ATCC 700345 / ANG-SQ1).